A 276-amino-acid polypeptide reads, in one-letter code: Phospholipid phosphatase 2 (276 aa).

Residues 1–4 lie on the Cytoplasmic side of the membrane; that stretch reads MERR. The helical transmembrane segment at 5 to 25 threads the bilayer; sequence WVFVLLDVLCVLVASLPFIIL. Residues 26–51 lie on the Lumenal side of the membrane; it reads TLVNAPYKRGFYCGDDSIRYPYRPDT. A helical membrane pass occupies residues 52–72; it reads ITHGLMAGVIITATVILVSLG. Over 73 to 87 the chain is Cytoplasmic; sequence EAYLVYTDRLYSRSN. Residues 88 to 108 traverse the membrane as a helical segment; it reads FNNYVAAIYKVLGTFLFGAAV. Topologically, residues 109–161 are lumenal; the sequence is SQSLTDLAKYMIGRLRPSFLAVCDPDWSQVNCSGYVQLEVCRGSPANVTEARL. Residues 117–125 form a phosphatase sequence motif I region; sequence KYMIGRLRP. N-linked (GlcNAc...) asparagine glycans are attached at residues asparagine 139 and asparagine 155. The helical transmembrane segment at 162–182 threads the bilayer; it reads SFYSGHSSFGMYCMLFLALYV. Positions 164–167 are phosphatase sequence motif II; the sequence is YSGH. Histidine 167 (proton donors) is an active-site residue. Over 183–189 the chain is Cytoplasmic; sequence QARLCWK. The chain crosses the membrane as a helical span at residues 190 to 210; it reads WARLLRPTVQFFLVAFAIYVG. Over 211–218 the chain is Lumenal; that stretch reads YTRVSDHK. The phosphatase sequence motif III stretch occupies residues 212 to 223; that stretch reads TRVSDHKHHWSD. The active-site Nucleophile is histidine 219. Residues 219–239 traverse the membrane as a helical segment; it reads HHWSDVLVGLLQGALVACLTV. Residues 240 to 276 lie on the Cytoplasmic side of the membrane; sequence RYVSDFFKSRPPQPCQEDEVPERKPSLSLTLTLGDRP. The tract at residues 251–276 is disordered; sequence PQPCQEDEVPERKPSLSLTLTLGDRP.

This sequence belongs to the PA-phosphatase related phosphoesterase family. As to quaternary structure, forms functional homodimers and homooligomers. Can also form heterooligomers with PLPP1 and PLPP3. In terms of processing, N-glycosylated. As to expression, expressed at high levels in lung, liver and kidney; at low levels in heart and brain, and was not detected in skeletal muscle.

The protein resides in the membrane. It is found in the cell membrane. The protein localises to the early endosome membrane. Its subcellular location is the endoplasmic reticulum membrane. It catalyses the reaction a 1,2-diacyl-sn-glycero-3-phosphate + H2O = a 1,2-diacyl-sn-glycerol + phosphate. The catalysed reaction is 1,2-dihexadecanoyl-sn-glycero-3-phosphate + H2O = 1,2-dihexadecanoyl-sn-glycerol + phosphate. The enzyme catalyses 1,2-di-(9Z-octadecenoyl)-sn-glycero-3-phosphate + H2O = 1,2-di-(9Z-octadecenoyl)-sn-glycerol + phosphate. It carries out the reaction a monoacyl-sn-glycero-3-phosphate + H2O = a monoacylglycerol + phosphate. It catalyses the reaction (9Z)-octadecenoyl-sn-glycero-3-phosphate + H2O = (9Z-octadecenoyl)-glycerol + phosphate. The catalysed reaction is sphing-4-enine 1-phosphate + H2O = sphing-4-enine + phosphate. The enzyme catalyses an N-acylsphing-4-enine 1-phosphate + H2O = an N-acylsphing-4-enine + phosphate. It carries out the reaction N-(octanoyl)-sphing-4-enine-1-phosphate + H2O = N-octanoylsphing-4-enine + phosphate. It catalyses the reaction N-(9Z-octadecenoyl)-ethanolamine phosphate + H2O = N-(9Z-octadecenoyl) ethanolamine + phosphate. It participates in lipid metabolism; phospholipid metabolism. Magnesium-independent phospholipid phosphatase. Insensitive to N-ethylmaleimide. In terms of biological role, magnesium-independent phospholipid phosphatase that catalyzes the dephosphorylation of a variety of glycerolipid and sphingolipid phosphate esters including phosphatidate/PA, lysophosphatidate/LPA, sphingosine 1-phosphate/S1P and ceramide 1-phosphate/C1P. Has no apparent extracellular phosphatase activity and therefore most probably acts intracellularly. Also acts on N-oleoyl ethanolamine phosphate/N-(9Z-octadecenoyl)-ethanolamine phosphate, a potential physiological compound. Through dephosphorylation of these bioactive lipid mediators produces new bioactive compounds and may regulate signal transduction in different cellular processes. Indirectly regulates, for instance, cell cycle G1/S phase transition through its phospholipid phosphatase activity. This chain is Phospholipid phosphatase 2, found in Mus musculus (Mouse).